We begin with the raw amino-acid sequence, 276 residues long: Large ribosomal subunit protein uL2 (276 aa).

The tract at residues 226 to 276 (MNSVDHPHGGGEGKTSGGRHPVSPWGTPTKGYKTRSNKRTDKLILRHRNKG) is disordered.

This sequence belongs to the universal ribosomal protein uL2 family. In terms of assembly, part of the 50S ribosomal subunit. Forms a bridge to the 30S subunit in the 70S ribosome.

Functionally, one of the primary rRNA binding proteins. Required for association of the 30S and 50S subunits to form the 70S ribosome, for tRNA binding and peptide bond formation. It has been suggested to have peptidyltransferase activity; this is somewhat controversial. Makes several contacts with the 16S rRNA in the 70S ribosome. The polypeptide is Large ribosomal subunit protein uL2 (Vesicomyosocius okutanii subsp. Calyptogena okutanii (strain HA)).